The following is a 448-amino-acid chain: TRAF family member-associated NF-kappa-B activator (448 aa).

Residues 35–65 form a necessary for interaction with ZC3H12A region; that stretch reads MDKNIGEQLNRAYEAFRQACMDRDSAVRELQ. The stretch at 60–98 forms a coiled coil; that stretch reads AVRELQQKQTENYEQRIREQQEQLSFQQNLIDRLKSQLL. Positions 105–224 are necessary for interaction with TRAF6; sequence DNSYGYVPLL…QCTDKTEKQE (120 aa). The segment at 166-205 is interaction with TBK1 and IKBKE; sequence HERDNIEKTFWDLKEEFHRICLLAKAQKDHLSKLNIPDIA. The TRAF family member interaction stretch occupies residues 205-224; it reads ATDTQCSVPIQCTDKTEKQE. Ser-211 carries the post-translational modification Phosphoserine. A Phosphothreonine modification is found at Thr-246. A phosphoserine mark is found at Ser-258, Ser-261, Ser-377, and Ser-380. The UBZ1-type zinc finger occupies 416-443; it reads PLVCEFCQELFPPSITSRGDFLRHLNTH. Zn(2+) contacts are provided by Cys-419, Cys-422, His-439, and His-443.

As to quaternary structure, homodimer. Found in a deubiquitination complex with TANK, USP10 and ZC3H12A; this complex inhibits genotoxic stress- or interleukin-1-beta-mediated NF-kappaB activation by promoting IKBKG or TRAF6 deubiquitination. Interacts with IKBKG; this interaction increases in response to DNA damage. Interacts with TRAF6; this interaction increases in response to DNA damage and recruits USP10 to the ubiquitinated TRAF6. Interacts with USP10; this interaction increases in response to DNA damage. Interacts with TBK1 and IKBKE. Also interacts with TRAF1, TRAF2, and TRAF3 by binding to their TRAF-C domains; the interaction with TRAF2 is disrupted by the phosphorylation of TANK by IKBKE. Interacts more strongly with TRAF1 and TRAF2 than TRAF3. Part of a ternary complex consisting of TANK, IKBKB and IKBKG. Interacts with IKBKG; the interaction is enhanced by IKBKE and TBK1. Heart, brain, spleen, lung, liver, skeletal muscle, kidney and testis.

The protein localises to the cytoplasm. In terms of biological role, adapter protein involved in I-kappa-B-kinase (IKK) regulation which constitutively binds TBK1 and IKBKE playing a role in antiviral innate immunity. Acts as a regulator of TRAF function by maintaining them in a latent state. Blocks TRAF2 binding to LMP1 and inhibits LMP1-mediated NF-kappa-B activation. Negatively regulates NF-kappaB signaling and cell survival upon DNA damage. Plays a role as an adapter to assemble ZC3H12A, USP10 in a deubiquitination complex which plays a negative feedback response to attenuate NF-kappaB activation through the deubiquitination of IKBKG or TRAF6 in response to interleukin-1-beta (IL1B) stimulation or upon DNA damage. Promotes UBP10-induced deubiquitination of TRAF6 in response to DNA damage. May control negatively TRAF2-mediated NF-kappa-B activation signaled by CD40, TNFR1 and TNFR2. Essential for the efficient induction of IRF-dependent transcription following infection with Sendai virus. This is TRAF family member-associated NF-kappa-B activator (Tank) from Mus musculus (Mouse).